We begin with the raw amino-acid sequence, 185 residues long: MVSSFRVQQAAREIRAGAVIAYPTEAVWGLGCDPWNEDAVYRLLALKSRPVDKGLILIADNIRQFDFLFEDFPEDWIDRMSSTWPGPNTWLVPHQDLLPEWVTGQHDTVALRVSDHPVVRELCALVGPLISTSCNPGGRPAAKTRLRVEQYFHGQLDLVLGGALGGRKNPSVIRDLATGEVVRPG.

The 182-residue stretch at 4 to 185 (SFRVQQAARE…LATGEVVRPG (182 aa)) folds into the YrdC-like domain.

It belongs to the SUA5 family. TsaC subfamily.

It is found in the cytoplasm. The enzyme catalyses L-threonine + hydrogencarbonate + ATP = L-threonylcarbamoyladenylate + diphosphate + H2O. Its function is as follows. Required for the formation of a threonylcarbamoyl group on adenosine at position 37 (t(6)A37) in tRNAs that read codons beginning with adenine. Catalyzes the conversion of L-threonine, HCO(3)(-)/CO(2) and ATP to give threonylcarbamoyl-AMP (TC-AMP) as the acyladenylate intermediate, with the release of diphosphate. The sequence is that of Threonylcarbamoyl-AMP synthase from Pseudomonas putida (strain ATCC 47054 / DSM 6125 / CFBP 8728 / NCIMB 11950 / KT2440).